The primary structure comprises 451 residues: tRNA-2-methylthio-N(6)-dimethylallyladenosine synthase (451 aa).

Residues 10 to 128 (KKFYTLTFGC…FPQLLEHVMQ (119 aa)) form the MTTase N-terminal domain. [4Fe-4S] cluster is bound by residues Cys19, Cys55, Cys89, Cys165, Cys169, and Cys172. The Radical SAM core domain occupies 151–381 (REDSIKAWVV…ISVQQEISEQ (231 aa)). The TRAM domain occupies 384-447 (KDLENTVQRI…SWNLYGEIFE (64 aa)).

The protein belongs to the methylthiotransferase family. MiaB subfamily. Monomer. [4Fe-4S] cluster is required as a cofactor.

The protein resides in the cytoplasm. It carries out the reaction N(6)-dimethylallyladenosine(37) in tRNA + (sulfur carrier)-SH + AH2 + 2 S-adenosyl-L-methionine = 2-methylsulfanyl-N(6)-dimethylallyladenosine(37) in tRNA + (sulfur carrier)-H + 5'-deoxyadenosine + L-methionine + A + S-adenosyl-L-homocysteine + 2 H(+). Catalyzes the methylthiolation of N6-(dimethylallyl)adenosine (i(6)A), leading to the formation of 2-methylthio-N6-(dimethylallyl)adenosine (ms(2)i(6)A) at position 37 in tRNAs that read codons beginning with uridine. This chain is tRNA-2-methylthio-N(6)-dimethylallyladenosine synthase, found in Natranaerobius thermophilus (strain ATCC BAA-1301 / DSM 18059 / JW/NM-WN-LF).